A 361-amino-acid chain; its full sequence is Transmembrane protein 116 (361 aa).

7 consecutive transmembrane segments (helical) span residues 29–49 (WIQMTMAVLSILGAGSIILYA), 64–84 (FLLSLTDLLLALSWLCGGLLF), 103–123 (TLYMASFFYTLHYVWVLYTGL), 147–167 (LGPVLSCLLPLLLTAPVFVAG), 210–230 (CMAIFLGTFLITIVGMSIFMG), 261–281 (MVLYPSAFFFCWGPALLLATM), and 295–315 (VALYILQAFTSASQGLLNCLV).

The protein localises to the membrane. In Danio rerio (Zebrafish), this protein is Transmembrane protein 116 (tmem116).